The chain runs to 391 residues: Phosphoglycerate kinase (391 aa).

Residues Asp21–Asn23, Arg36, His59–Arg62, Arg113, and Arg146 each bind substrate. Residues Lys197, Glu319, and Gly345–Thr348 contribute to the ATP site.

This sequence belongs to the phosphoglycerate kinase family. As to quaternary structure, monomer.

Its subcellular location is the cytoplasm. The catalysed reaction is (2R)-3-phosphoglycerate + ATP = (2R)-3-phospho-glyceroyl phosphate + ADP. It participates in carbohydrate degradation; glycolysis; pyruvate from D-glyceraldehyde 3-phosphate: step 2/5. The protein is Phosphoglycerate kinase of Shewanella sp. (strain MR-4).